A 323-amino-acid chain; its full sequence is MGFERGGRGGARGGGRGGFGGDRGGRGGARGGSRGGFGGGRGGGAPRGRGGPRGGGRGGATRGRGGARGGAKGGAAGKKVIVEPHRHKGVFVARGGKEDLLATVNLVPGESVYGEKRISVENASKEEGGASTKTEYRIWNPFRSKLAAGILGGLETIYMKPGSKVLYLGAASGTSVSHVADIVGPTGSVYAVEFSHRSGRDLINMATRRTNVIPIVEDARKPMAYRMLLPMVDVIFADVAQPDQARIVGINAKLFLKQGGGLLISIKASCIDSTAPPEQVFASEVQKLREDKFFPKEQLTLEPYERDHAMVSCVYQQKEFVDN.

The interval 1 to 80 (MGFERGGRGG…AKGGAAGKKV (80 aa)) is disordered. Residues R5, R8, R12, R16, R23, R26, R30, R34, R41, R47, R49, R53, R57, R62, R64, and R68 each carry the asymmetric dimethylarginine modification. Gly residues predominate over residues 8-76 (RGGARGGGRG…ARGGAKGGAA (69 aa)). Residues 174 to 175 (TS), 193 to 194 (EF), 218 to 219 (DA), and 238 to 241 (DVAQ) contribute to the S-adenosyl-L-methionine site.

It belongs to the methyltransferase superfamily. Fibrillarin family. Component of box C/D small nucleolar ribonucleoprotein (snoRNP) particles. By homology to other fibrillarins, some or all of the N-terminal domain arginines are modified to asymmetric dimethylarginine (DMA).

The protein localises to the nucleus. It is found in the nucleolus. It catalyses the reaction L-glutaminyl-[histone H2A] + S-adenosyl-L-methionine = N(5)-methyl-L-glutaminyl-[histone H2A] + S-adenosyl-L-homocysteine + H(+). Functionally, S-adenosyl-L-methionine-dependent methyltransferase that has the ability to methylate both RNAs and proteins. Involved in pre-rRNA processing. Utilizes the methyl donor S-adenosyl-L-methionine to catalyze the site-specific 2'-hydroxyl methylation of ribose moieties in pre-ribosomal RNA. Site specificity is provided by a guide RNA that base pairs with the substrate. Methylation occurs at a characteristic distance from the sequence involved in base pairing with the guide RNA. Also acts as a protein methyltransferase by mediating methylation of 'Gln-105' of histone H2A (H2AQ105me), a modification that impairs binding of the FACT complex and is specifically present at 35S ribosomal DNA locus. The polypeptide is rRNA 2'-O-methyltransferase fibrillarin (nop-1) (Neurospora crassa (strain ATCC 24698 / 74-OR23-1A / CBS 708.71 / DSM 1257 / FGSC 987)).